We begin with the raw amino-acid sequence, 209 residues long: Redox-sensing transcriptional repressor Rex (209 aa).

Residues leucine 16–phenylalanine 55 constitute a DNA-binding region (H-T-H motif). Glycine 90–glycine 95 contributes to the NAD(+) binding site.

This sequence belongs to the transcriptional regulatory Rex family. Homodimer.

It is found in the cytoplasm. Modulates transcription in response to changes in cellular NADH/NAD(+) redox state. The sequence is that of Redox-sensing transcriptional repressor Rex from Bacillus cereus (strain G9842).